We begin with the raw amino-acid sequence, 475 residues long: MTNTATNIGYITQIIGPVVDVEFTTGKLPQIYNAIIIGSGENAVTCEVQQLLGNNKVRAVSMTSTDGLKRGMEVTDTQAPISVPVGKATLGRIFNVLGQPVDNMGDVALDQTLPIHRGSPAFTQLETKPSIFETGIKVVDLLAPYRRGGKIGLFGGAGVGKTVLIMELINNIAKAHGGVSVFGGVGERTREGNDLYMEMKESKVINESNLGESKVALVYGQMNEPPGARMRVGLTALTMAEYFRDVNKQDVLLFIDNIFRFVQAGSEVSALLGRMPSAVGYQPTLATEMGSLQERITSTTEGSITSIQAVYVPADDLTDPAPATTFSHLDATTVLSRNLAAKGIYPAVDPLDSTSTMLQINIVGQEHYSCAQNVKETLQRYKELQDIIAILGLDELSEEDRQIVARARKIERFLSQPFFVAEVFTGSPGKYVSLADTMKGFNMILNGELDELPEQSFYLVGNIDEAIEKAKSLKG.

Position 155-162 (155-162 (GGAGVGKT)) interacts with ATP.

It belongs to the ATPase alpha/beta chains family. In terms of assembly, F-type ATPases have 2 components, CF(1) - the catalytic core - and CF(0) - the membrane proton channel. CF(1) has five subunits: alpha(3), beta(3), gamma(1), delta(1), epsilon(1). CF(0) has four main subunits: a(1), b(1), b'(1) and c(9-12).

The protein localises to the plastid. It is found in the chloroplast thylakoid membrane. It carries out the reaction ATP + H2O + 4 H(+)(in) = ADP + phosphate + 5 H(+)(out). In terms of biological role, produces ATP from ADP in the presence of a proton gradient across the membrane. The catalytic sites are hosted primarily by the beta subunits. The sequence is that of ATP synthase subunit beta, chloroplastic from Guillardia theta (Cryptophyte).